Reading from the N-terminus, the 181-residue chain is Protein Syd (181 aa).

This sequence belongs to the Syd family.

The protein resides in the cell inner membrane. Interacts with the SecY protein in vivo. May bind preferentially to an uncomplexed state of SecY, thus functioning either as a chelating agent for excess SecY in the cell or as a regulatory factor that negatively controls the translocase function. This is Protein Syd from Salmonella arizonae (strain ATCC BAA-731 / CDC346-86 / RSK2980).